The primary structure comprises 75 residues: Small ribosomal subunit protein bS18 (75 aa).

The protein belongs to the bacterial ribosomal protein bS18 family. Part of the 30S ribosomal subunit. Forms a tight heterodimer with protein bS6.

Its function is as follows. Binds as a heterodimer with protein bS6 to the central domain of the 16S rRNA, where it helps stabilize the platform of the 30S subunit. In Moorella thermoacetica (strain ATCC 39073 / JCM 9320), this protein is Small ribosomal subunit protein bS18.